Here is a 459-residue protein sequence, read N- to C-terminus: Elongation factor 1-alpha (459 aa).

Gly2 bears the N,N,N-trimethylglycine mark. Lys3 is modified (N6,N6-dimethyllysine; alternate). Position 3 is an N6-methyllysine; alternate (Lys3). One can recognise a tr-type G domain in the interval 5–239; sequence KSHINVVVIG…DAIDPPSRPT (235 aa). The G1 stretch occupies residues 14–21; that stretch reads GHVDSGKS. Residue 14–21 coordinates GTP; sequence GHVDSGKS. Lys30 bears the N6-methyllysine mark. A G2 region spans residues 70–74; it reads GITID. Position 79 is an N6,N6,N6-trimethyllysine (Lys79). A G3 region spans residues 91-94; that stretch reads DAPG. Residues 91–95 and 153–156 contribute to the GTP site; these read DAPGH and NKMD. The tract at residues 153–156 is G4; that stretch reads NKMD. A G5 region spans residues 192–194; sequence SGF. Lys315 is subject to N6,N6-dimethyllysine; alternate. N6-methyllysine; alternate is present on Lys315. At Lys389 the chain carries N6-methyllysine.

This sequence belongs to the TRAFAC class translation factor GTPase superfamily. Classic translation factor GTPase family. EF-Tu/EF-1A subfamily.

It localises to the cytoplasm. In terms of biological role, this protein promotes the GTP-dependent binding of aminoacyl-tRNA to the A-site of ribosomes during protein biosynthesis. This chain is Elongation factor 1-alpha (TEF1), found in Aureobasidium pullulans (Black yeast).